Here is a 61-residue protein sequence, read N- to C-terminus: Alpha-conotoxine-like Am1.3 (61 aa).

An N-terminal signal peptide occupies residues 1–21 (MGMRMMFTVFLLVVLATTVVS). A propeptide spanning residues 22–44 (FMSGRASHGRNAAASDLIALTIK) is cleaved from the precursor. Cys60 is modified (cysteine amide).

It belongs to the conotoxin A superfamily. Is not hydroxylated. Post-translationally, contains 2 disulfide bonds. In terms of tissue distribution, expressed by the venom duct.

It is found in the secreted. In terms of biological role, alpha-conotoxins act on postsynaptic membranes, they bind to the nicotinic acetylcholine receptors (nAChR) and thus inhibit them. The chain is Alpha-conotoxine-like Am1.3 from Conus amadis (Amadis cone).